Here is a 122-residue protein sequence, read N- to C-terminus: Large ribosomal subunit protein uL14 (122 aa).

The protein belongs to the universal ribosomal protein uL14 family. As to quaternary structure, part of the 50S ribosomal subunit. Forms a cluster with proteins L3 and L19. In the 70S ribosome, L14 and L19 interact and together make contacts with the 16S rRNA in bridges B5 and B8.

Its function is as follows. Binds to 23S rRNA. Forms part of two intersubunit bridges in the 70S ribosome. The chain is Large ribosomal subunit protein uL14 from Spiroplasma citri.